We begin with the raw amino-acid sequence, 351 residues long: Probable aldo-keto reductase 2 (351 aa).

Residue tyrosine 67 is the Proton donor of the active site. Substrate is bound at residue histidine 134. Position 213–223 (213–223) interacts with NADP(+); that stretch reads SPLGRGFFSAG. Residues 317-351 are disordered; the sequence is YASTDDVRGDRYPQAMANTTWQNSETPPLSSWKAQ. Polar residues predominate over residues 332–351; that stretch reads MANTTWQNSETPPLSSWKAQ.

This sequence belongs to the aldo/keto reductase family.

The sequence is that of Probable aldo-keto reductase 2 from Oryza sativa subsp. japonica (Rice).